The primary structure comprises 953 residues: Zinc finger protein 507 (953 aa).

Residue serine 95 is modified to Phosphoserine. C2H2-type zinc fingers lie at residues 125 to 147 (YQCSLCKFLSSSFSVLKDHIKQH), 155 to 185 (LMCSECHITSRSQEELEAHVVNDHDNDANIH), and 248 to 270 (YRCLFCSYTCGQQRMLKTHAWKH). Serine 427 carries the phosphoserine modification. A disordered region spans residues 470 to 489 (KGLATDENAPPGRRRTNSES). 5 consecutive C2H2-type zinc fingers follow at residues 641 to 663 (YRCRLCHYTSGNKGYIKQHLRVH), 669 to 691 (YQCPICEHIADNSKDLESHMIHH), 697 to 720 (YQCKQCEESFHYKSQLRNHEREQH), 758 to 780 (YRCDVCDYTSTTYVGVRNHRRIH), and 786 to 808 (YRCSLCGYVCSHPPSLKSHMWKH). A disordered region spans residues 831 to 891 (GRVLGKTPGK…KLSPTSNTSY (61 aa)). Residues 854-891 (TGSSENAVSSSELMSQTPSEVLGTNENEKLSPTSNTSY) show a composition bias toward polar residues. A C2H2-type 9 zinc finger spans residues 911-933 (FCCCICGFESTSKENLLDHMKEH).

It belongs to the krueppel C2H2-type zinc-finger protein family.

The protein localises to the nucleus. In terms of biological role, may be involved in transcriptional regulation. This Pongo abelii (Sumatran orangutan) protein is Zinc finger protein 507 (ZNF507).